The chain runs to 462 residues: Kinetochore protein Nuf2-A (462 aa).

Coiled-coil stretches lie at residues 143–277 (SSYK…DKCD) and 308–461 (EIHR…RLSR). The disordered stretch occupies residues 239–259 (RMKSQIVESPEQRKSKTERMK). Residues 248–259 (PEQRKSKTERMK) show a composition bias toward basic and acidic residues.

Belongs to the NUF2 family. In terms of assembly, component of the NDC80 complex, which is composed of ndc80, cdca1, spbc24 and spbc25. The NDC80 complex interacts with mis12 and zwint.

It is found in the nucleus. Its subcellular location is the chromosome. The protein resides in the centromere. It localises to the kinetochore. Functionally, acts as a component of the essential kinetochore-associated NDC80 complex, which is required for chromosome segregation and spindle checkpoint activity. Required for kinetochore integrity and the organization of stable microtubule binding sites in the outer plate of the kinetochore. The NDC80 complex synergistically enhances the affinity of the SKA1 complex for microtubules and may allow the NDC80 complex to track depolymerizing microtubules. The chain is Kinetochore protein Nuf2-A (nuf2-a) from Xenopus laevis (African clawed frog).